Here is a 90-residue protein sequence, read N- to C-terminus: U7-theraphotoxin-Hhn1b (90 aa).

Positions 1-19 (MKTAIFTVVLALAVFAVLS) are cleaved as a signal peptide. A propeptide spanning residues 20-50 (FGWEANEKALSEEFTELIHEKEAASETEARE) is cleaved from the precursor. Disulfide bonds link C51-C65, C58-C70, and C64-C81.

It belongs to the neurotoxin 10 (Hwtx-1) family. 13 (Hntx-13) subfamily. As to expression, expressed by the venom gland.

It is found in the secreted. Ion channel inhibitor. The chain is U7-theraphotoxin-Hhn1b from Cyriopagopus hainanus (Chinese bird spider).